We begin with the raw amino-acid sequence, 153 residues long: Aminoglycoside N(6')-acetyltransferase type 1 (153 aa).

Residues 6–153 (PTIRQATPAD…YFRMPLEPSA (148 aa)) form the N-acetyltransferase domain. Substrate is bound by residues Trp27, Tyr70, Glu83, Asp119, and Glu140.

Homodimer.

The enzyme catalyses kanamycin B + acetyl-CoA = N(6')-acetylkanamycin B + CoA + H(+). Its function is as follows. Catalyzes the transfer of an acetyl group from acetyl-CoA to the 6'-amino group of aminoglycoside molecules conferring resistance to antibiotics containing the purpurosamine ring including amikacin, gentamicin, kanamycin B, tobramycin, netilmicin, and isepamicin. In Stenotrophomonas maltophilia (Pseudomonas maltophilia), this protein is Aminoglycoside N(6')-acetyltransferase type 1.